Here is a 107-residue protein sequence, read N- to C-terminus: Iron-binding protein IscA (107 aa).

Fe cation-binding residues include Cys-35, Cys-99, and Cys-101.

It belongs to the HesB/IscA family. In terms of assembly, homodimer; may form tetramers and higher multimers. Fe cation is required as a cofactor.

Functionally, is able to transfer iron-sulfur clusters to apo-ferredoxin. Multiple cycles of [2Fe2S] cluster formation and transfer are observed, suggesting that IscA acts catalytically. Recruits intracellular free iron so as to provide iron for the assembly of transient iron-sulfur cluster in IscU in the presence of IscS, L-cysteine and the thioredoxin reductase system TrxA/TrxB. This is Iron-binding protein IscA from Xenorhabdus nematophila (strain ATCC 19061 / DSM 3370 / CCUG 14189 / LMG 1036 / NCIMB 9965 / AN6).